Reading from the N-terminus, the 85-residue chain is MAHKKGVGSSRNGRDSEAKRLGVKAFGGELVSGGSIIVRQRGTKFHAGENTGLGKDHTIYAKVDGRVKFEVKGAFGRQYVSIIPA.

Belongs to the bacterial ribosomal protein bL27 family.

The polypeptide is Large ribosomal subunit protein bL27 (Cellvibrio japonicus (strain Ueda107) (Pseudomonas fluorescens subsp. cellulosa)).